The following is a 256-amino-acid chain: Thioredoxin-dependent peroxide reductase, mitochondrial (256 aa).

A mitochondrion-targeting transit peptide spans 1-61 (MAAAVGRLLR…KLFSTSSSYH (61 aa)). One can recognise a Thioredoxin domain in the interval 63 to 221 (PAVTQHAPYF…TLRLVKAFQY (159 aa)). K83 bears the N6-succinyllysine mark. K91 carries the N6-acetyllysine; alternate modification. K91 is subject to N6-succinyllysine; alternate. Residue C108 is the Cysteine sulfenic acid (-SOH) intermediate of the active site. T146 is subject to Phosphothreonine.

The protein belongs to the peroxiredoxin family. AhpC/Prx1 subfamily. As to quaternary structure, homodimer; disulfide-linked, upon oxidation. 6 homodimers assemble to form a ring-like dodecamer. Interacts with NEK6. Interacts with LRRK2. Interacts with MAP3K13. Interacts with RPS6KC1 (via PX domain). In terms of processing, phosphorylated by LRRK2; phosphorylation reduces perodixase activity. The enzyme can be inactivated by further oxidation of the cysteine sulfenic acid (C(P)-SOH) to sulphinic acid (C(P)-SO2H) and sulphonic acid (C(P)-SO3H) instead of its condensation to a disulfide bond. Post-translationally, S-palmitoylated.

It is found in the mitochondrion. Its subcellular location is the cytoplasm. The protein localises to the early endosome. It catalyses the reaction a hydroperoxide + [thioredoxin]-dithiol = an alcohol + [thioredoxin]-disulfide + H2O. Thiol-specific peroxidase that catalyzes the reduction of hydrogen peroxide and organic hydroperoxides to water and alcohols, respectively. Plays a role in cell protection against oxidative stress by detoxifying peroxides. Acts synergistically with MAP3K13 to regulate the activation of NF-kappa-B in the cytosol. Required for the maintenance of physical strength. The polypeptide is Thioredoxin-dependent peroxide reductase, mitochondrial (PRDX3) (Pongo abelii (Sumatran orangutan)).